We begin with the raw amino-acid sequence, 400 residues long: Large envelope protein (400 aa).

N-acetylmethionine is present on methionine 1. The N-myristoyl glycine; by host moiety is linked to residue glycine 2. The interval 2 to 119 is pre-S1; it reads GAPLSTTRRG…PPLRDTHPQA (118 aa). A pre-S region spans residues 2-174; sequence GAPLSTTRRG…FSKTGGPAMN (173 aa). Residues 2 to 181 are Virion surface; in external conformation-facing; it reads GAPLSTTRRG…AMNMDSITSG (180 aa). Residues 2–253 lie on the Intravirion; in internal conformation side of the membrane; sequence GAPLSTTRRG…PGYRWMCLRR (252 aa). N-linked (GlcNAc...) asparagine glycosylation occurs at proline 4. Residues 84 to 114 form a disordered region; that stretch reads VLTTLPADPPPASTNRRSGRKPTPVSPPLRD. Residues 120 to 174 form a pre-S2 region; the sequence is MQWNSTQFHQALLDPRVRALYFPAGGSSSETQNPAPTIASLTSSIFSKTGGPAMN. A helical transmembrane segment spans residues 182-202; that stretch reads LLGPLLVLQAVCFLLTKILTI. Residues 203 to 253 lie on the Intravirion; in external conformation side of the membrane; that stretch reads PQSLDSWWTSLNFLGGLPGCPGQNSQSPTSNHLPTSCPPTCPGYRWMCLRR. The chain crosses the membrane as a helical span at residues 254-274; it reads FIIFLFILLLCLIFLLVLLDY. Residues 275-348 are Virion surface-facing; it reads QGMLPVCPLI…WASARFSWLS (74 aa). Asparagine 320 carries an N-linked (GlcNAc...) asparagine; by host glycan. Residues 349 to 369 form a helical membrane-spanning segment; that stretch reads LLVQFVQWCVGLSPTVWLLVI. The Intravirion portion of the chain corresponds to 370 to 375; it reads WMIWYW. The helical transmembrane segment at 376 to 398 threads the bilayer; sequence GPNLCSILSPFIPLLPIFCYLWV. The Virion surface portion of the chain corresponds to 399 to 400; it reads SI.

Belongs to the orthohepadnavirus major surface antigen family. In terms of assembly, in its internal form (Li-HBsAg), interacts with the capsid protein and with the isoform S. Interacts with host chaperone CANX. Associates with host chaperone CANX through its pre-S2 N glycan; this association may be essential for isoform M proper secretion. As to quaternary structure, interacts with isoform L. Interacts with the antigens of satellite virus HDV (HDVAgs); this interaction is required for encapsidation of HDV genomic RNA. Post-translationally, isoform M is N-terminally acetylated by host at a ratio of 90%, and N-glycosylated by host at the pre-S2 region. Myristoylated.

It is found in the virion membrane. The large envelope protein exists in two topological conformations, one which is termed 'external' or Le-HBsAg and the other 'internal' or Li-HBsAg. In its external conformation the protein attaches the virus to cell receptors and thereby initiating infection. This interaction determines the species specificity and liver tropism. This attachment induces virion internalization predominantly through caveolin-mediated endocytosis. The large envelope protein also assures fusion between virion membrane and endosomal membrane. In its internal conformation the protein plays a role in virion morphogenesis and mediates the contact with the nucleocapsid like a matrix protein. Its function is as follows. The middle envelope protein plays an important role in the budding of the virion. It is involved in the induction of budding in a nucleocapsid independent way. In this process the majority of envelope proteins bud to form subviral lipoprotein particles of 22 nm of diameter that do not contain a nucleocapsid. In Homo sapiens (Human), this protein is Large envelope protein.